Reading from the N-terminus, the 227-residue chain is Orotate phosphoribosyltransferase (227 aa).

5-phospho-alpha-D-ribose 1-diphosphate is bound by residues Lys51, Arg119, Lys120, and Lys123. Residues Thr149 and Arg177 each coordinate orotate.

It belongs to the purine/pyrimidine phosphoribosyltransferase family. PyrE subfamily. In terms of assembly, homodimer. Expressed in body wall muscles, spermatheca and vulva muscles.

It catalyses the reaction orotidine 5'-phosphate + diphosphate = orotate + 5-phospho-alpha-D-ribose 1-diphosphate. It carries out the reaction UMP + diphosphate = 5-phospho-alpha-D-ribose 1-diphosphate + uracil. Its pathway is pyrimidine metabolism; UMP biosynthesis via de novo pathway; UMP from orotate: step 1/2. It participates in pyrimidine metabolism; UMP biosynthesis via salvage pathway; UMP from uracil: step 1/1. In terms of biological role, phosphoribosyltransferase which catalyzes the formation of UMP from uracil in vitro and thus may be involved in UMP biosynthesis via the salvage pathway. May also participate in the first step of UMP synthesis by catalyzing the formation of orotidine 5'-phosphate, a UMP precursor, from orotate. This chain is Orotate phosphoribosyltransferase, found in Caenorhabditis elegans.